The following is a 262-amino-acid chain: Phosphatidylglycerol--prolipoprotein diacylglyceryl transferase (262 aa).

Transmembrane regions (helical) follow at residues 17–37, 57–77, 95–115, and 119–139; these read LAIH…YALG, LIFY…VLFY, GGMS…LFAH, and LGFF…LAAG. Arg-140 provides a ligand contact to a 1,2-diacyl-sn-glycero-3-phospho-(1'-sn-glycerol). 3 helical membrane passes run 173–193, 200–220, and 227–247; these read PSQL…LWWY, AGQV…LVEF, and FLGL…PMVL.

The protein belongs to the Lgt family.

It is found in the cell inner membrane. It catalyses the reaction L-cysteinyl-[prolipoprotein] + a 1,2-diacyl-sn-glycero-3-phospho-(1'-sn-glycerol) = an S-1,2-diacyl-sn-glyceryl-L-cysteinyl-[prolipoprotein] + sn-glycerol 1-phosphate + H(+). Its pathway is protein modification; lipoprotein biosynthesis (diacylglyceryl transfer). In terms of biological role, catalyzes the transfer of the diacylglyceryl group from phosphatidylglycerol to the sulfhydryl group of the N-terminal cysteine of a prolipoprotein, the first step in the formation of mature lipoproteins. The protein is Phosphatidylglycerol--prolipoprotein diacylglyceryl transferase of Bordetella bronchiseptica (strain ATCC BAA-588 / NCTC 13252 / RB50) (Alcaligenes bronchisepticus).